The primary structure comprises 1040 residues: MPVKPSAQNNSPSKPTSKSVPVDSDSLVIGDAIYHLADHTPMMVQYLNMKVNYPQALLLYRMGDFYELFFEDAKRAAQILDITLTRRGTDKAGNTIAMAGVPFHAADSYMARLIAAGQTVVVCEQIDESATGTDNANNPSNAPTMGDKQKKDKSKSTAGTIMRREVVKTLTAGTITDDALIAPNHTPTVVAIDIETPKSNSKQPVQAAVSQMDLAAGTLTTQTISANQDDIESLQTQMLTVLARFAPSECIISEALSDSNGDISEEWLLWLRQHLNCPIIEVAANDFHREHASATLCQQFEVQRLDGLGISGAPLAQSSCAALIHYARQTQQRHVPQLNQLIVEYNDDYLIIDANSQQNLELFTPVSSNGTSLISVLNHCQTPMGRRLLVQQMKRPLRQHSRINLRLDAITSLLDTDKQSEQCSGNISLVTSLRETLNAIGDIERISSRIGLMSAKPRDLRKLADGIASSAQLTTLLTNAGISHEQAGLLPMLMQQLPAQLPAVQSVAELIERAIIVEPPAHIRDGGMLAAGYDAEFDRLTHLHDNIQVTLDEMVERARQESQLPSLKVGFNKVSGFYFELPKMQAKNAPAHFIRRQTLKSSERFITNELKTVETEYLSAQSLALTREKQLYNELLIRLGSHLAELQQLSAAIAQIDVLNNWAQLAITYNWQRPVMSNESKKSSILDNSLENSHSENGLNNNSQTSINIKEGRHVVVEAVLNPIHTHQNNPAKHSSHFVANDCVLGSYENPERLLMITGPNMGGKSTYMRQTALIVLLAHCGSFVPAARAHIGDIDRIFTRIGSADDLAGGKSTFMVEMIETANILNQATNKSLVLMDEVGRGTATTDGLAIAHACVNRLVEIGCLTLFATHYFELTKLAQNPKESSGSNDKFIRNVHVAASEIDGQLLLLHQIKDGAASSSFGLHVAKMAGIPIQVLNDAKRYLVDNLSIDNLKPDNESIDDDKNELAKSVKDKRQQTYDSNIEKSNIRNLDKKQKNIDIPQQNQLFSLQDELQAIDPDSLTPKQAHDLLYHLKEIISY.

The segment covering 1–10 (MPVKPSAQNN) has biased composition (polar residues). 2 disordered regions span residues 1 to 22 (MPVK…SVPV) and 130 to 157 (ATGT…SKST). A compositionally biased stretch (low complexity) spans 11 to 22 (SPSKPTSKSVPV). Residues 130 to 143 (ATGTDNANNPSNAP) are compositionally biased toward polar residues. Position 759 to 766 (759 to 766 (GPNMGGKS)) interacts with ATP.

Belongs to the DNA mismatch repair MutS family.

This protein is involved in the repair of mismatches in DNA. It is possible that it carries out the mismatch recognition step. This protein has a weak ATPase activity. In Psychrobacter cryohalolentis (strain ATCC BAA-1226 / DSM 17306 / VKM B-2378 / K5), this protein is DNA mismatch repair protein MutS.